Here is a 279-residue protein sequence, read N- to C-terminus: B3 domain-containing protein Os11g0156000 (279 aa).

A DNA-binding region (TF-B3) is located at residues 38–144 (FEKPLTPSDV…DRLFIGCRRR (107 aa)). Disordered regions lie at residues 148 to 182 (AAAQTPAPPPAVRVAPAAQNAGEQQPWSPMCYSTS) and 203 to 228 (HDHGDMHHADESPRDTDSPSFSAGSA). The span at 159–168 (VRVAPAAQNA) shows a compositional bias: low complexity. Residues 203-219 (HDHGDMHHADESPRDTD) are compositionally biased toward basic and acidic residues.

It localises to the nucleus. The protein is B3 domain-containing protein Os11g0156000 of Oryza sativa subsp. japonica (Rice).